A 490-amino-acid chain; its full sequence is AP-5 complex subunit mu-1 (490 aa).

The 271-residue stretch at 206–476 (KAQISISITE…LISSDYYIWN (271 aa)) folds into the MHD domain.

Belongs to the adaptor complexes medium subunit family. Probably part of the adaptor protein complex 5 (AP-5) a tetramer composed of AP5B1, AP5M1, AP5S1 and AP5Z1. Widely expressed, including in small intestine and testis. In small intestine, highly expressed in cytoplasm of villi epithelial cells and internal glands. In testis, selectively expressed in maturing sperm cells (at protein level).

The protein localises to the cytoplasm. It localises to the cytosol. Its subcellular location is the late endosome membrane. It is found in the lysosome membrane. In terms of biological role, as part of AP-5, a probable fifth adaptor protein complex it may be involved in endosomal transport. The protein is AP-5 complex subunit mu-1 (Ap5m1) of Mus musculus (Mouse).